Here is a 76-residue protein sequence, read N- to C-terminus: Small ribosomal subunit protein bS18 (76 aa).

The protein belongs to the bacterial ribosomal protein bS18 family. In terms of assembly, part of the 30S ribosomal subunit. Forms a tight heterodimer with protein bS6.

Binds as a heterodimer with protein bS6 to the central domain of the 16S rRNA, where it helps stabilize the platform of the 30S subunit. The protein is Small ribosomal subunit protein bS18 of Petrotoga mobilis (strain DSM 10674 / SJ95).